A 793-amino-acid polypeptide reads, in one-letter code: Outer membrane protein assembly factor BamA (793 aa).

The signal sequence occupies residues 1 to 19; the sequence is MKKLLIASLLFGTTTTVFA. 5 consecutive POTRA domains span residues 22–89, 90–170, 173–259, 262–341, and 344–418; these read FVAK…VVAK, SIIS…INED, AKLA…VNEG, YDLR…VDAG, and LTVR…VKER.

The protein belongs to the BamA family. In terms of assembly, part of the Bam complex.

It localises to the cell outer membrane. Its function is as follows. Part of the outer membrane protein assembly complex, which is involved in assembly and insertion of beta-barrel proteins into the outer membrane. In Haemophilus influenzae, this protein is Outer membrane protein assembly factor BamA.